The primary structure comprises 1356 residues: DNA-directed RNA polymerase subunit beta (1356 aa).

Belongs to the RNA polymerase beta chain family. The RNAP catalytic core consists of 2 alpha, 1 beta, 1 beta' and 1 omega subunit. When a sigma factor is associated with the core the holoenzyme is formed, which can initiate transcription.

The catalysed reaction is RNA(n) + a ribonucleoside 5'-triphosphate = RNA(n+1) + diphosphate. Functionally, DNA-dependent RNA polymerase catalyzes the transcription of DNA into RNA using the four ribonucleoside triphosphates as substrates. The chain is DNA-directed RNA polymerase subunit beta from Phenylobacterium zucineum (strain HLK1).